Here is a 1375-residue protein sequence, read N- to C-terminus: DNA-directed RNA polymerase subunit beta (1375 aa).

Belongs to the RNA polymerase beta chain family. As to quaternary structure, the RNAP catalytic core consists of 2 alpha, 1 beta, 1 beta' and 1 omega subunit. When a sigma factor is associated with the core the holoenzyme is formed, which can initiate transcription.

It carries out the reaction RNA(n) + a ribonucleoside 5'-triphosphate = RNA(n+1) + diphosphate. Its function is as follows. DNA-dependent RNA polymerase catalyzes the transcription of DNA into RNA using the four ribonucleoside triphosphates as substrates. The chain is DNA-directed RNA polymerase subunit beta from Methylorubrum populi (strain ATCC BAA-705 / NCIMB 13946 / BJ001) (Methylobacterium populi).